Consider the following 268-residue polypeptide: 4-hydroxy-tetrahydrodipicolinate reductase (268 aa).

NAD(+)-binding positions include 8-13 (GAAGRM) and Glu34. Arg35 is a binding site for NADP(+). Residues 96-98 (GST) and 120-123 (SPNM) each bind NAD(+). His153 functions as the Proton donor/acceptor in the catalytic mechanism. His154 serves as a coordination point for (S)-2,3,4,5-tetrahydrodipicolinate. Catalysis depends on Lys157, which acts as the Proton donor. 163-164 (GT) serves as a coordination point for (S)-2,3,4,5-tetrahydrodipicolinate.

It belongs to the DapB family.

The protein localises to the cytoplasm. It carries out the reaction (S)-2,3,4,5-tetrahydrodipicolinate + NAD(+) + H2O = (2S,4S)-4-hydroxy-2,3,4,5-tetrahydrodipicolinate + NADH + H(+). The catalysed reaction is (S)-2,3,4,5-tetrahydrodipicolinate + NADP(+) + H2O = (2S,4S)-4-hydroxy-2,3,4,5-tetrahydrodipicolinate + NADPH + H(+). It functions in the pathway amino-acid biosynthesis; L-lysine biosynthesis via DAP pathway; (S)-tetrahydrodipicolinate from L-aspartate: step 4/4. Its function is as follows. Catalyzes the conversion of 4-hydroxy-tetrahydrodipicolinate (HTPA) to tetrahydrodipicolinate. This Anaeromyxobacter sp. (strain Fw109-5) protein is 4-hydroxy-tetrahydrodipicolinate reductase.